Reading from the N-terminus, the 316-residue chain is Myb-related protein 306 (316 aa).

HTH myb-type domains follow at residues 9 to 65 (KIGV…RPGI) and 66 to 116 (KRGD…KKKL). DNA-binding regions (H-T-H motif) lie at residues 37-61 (WRAIPSNTGLLRCSKSCRLRWTNYL) and 89-112 (WAAIASYLPHRTDNDIKNYWNTHL). Disordered stretches follow at residues 119 to 144 (LQSPENGKCQDGNSSVDSDKSVSKGQ), 168 to 193 (KTSSSTDDPKLSTVQTTQPRPFQAST), and 209 to 230 (KKSPVNASSTSQAGSSESTTTS). Residues 135 to 144 (DSDKSVSKGQ) are compositionally biased toward basic and acidic residues. The segment covering 181-193 (VQTTQPRPFQAST) has biased composition (polar residues). Low complexity predominate over residues 216–230 (SSTSQAGSSESTTTS).

In terms of tissue distribution, expressed in flowers, leaves and weakly in seed pods.

It localises to the nucleus. Functionally, transcription factor. In Antirrhinum majus (Garden snapdragon), this protein is Myb-related protein 306.